We begin with the raw amino-acid sequence, 153 residues long: Small ribosomal subunit protein bS16 (153 aa).

Positions 130–153 (EAEAAAAAEEAPAEEAAEEAPAEA) are disordered. Residues 140-153 (APAEEAAEEAPAEA) show a composition bias toward acidic residues.

The protein belongs to the bacterial ribosomal protein bS16 family.

In Bifidobacterium longum (strain NCC 2705), this protein is Small ribosomal subunit protein bS16.